Consider the following 233-residue polypeptide: Ribonuclease 3 (233 aa).

The RNase III domain occupies 4–126; that stretch reads LNKLMERLGH…IVGSIYIDAG (123 aa). Glu-39 serves as a coordination point for Mg(2+). Residue Asp-43 is part of the active site. Mg(2+) contacts are provided by Asp-112 and Glu-115. The active site involves Glu-115. Positions 153-222 constitute a DRBM domain; the sequence is DAKSLLQEWL…AKRFLELLDD (70 aa).

The protein belongs to the ribonuclease III family. As to quaternary structure, homodimer. Mg(2+) is required as a cofactor.

It is found in the cytoplasm. It carries out the reaction Endonucleolytic cleavage to 5'-phosphomonoester.. Its function is as follows. Digests double-stranded RNA. Involved in the processing of primary rRNA transcript to yield the immediate precursors to the large and small rRNAs (23S and 16S). Processes some mRNAs, and tRNAs when they are encoded in the rRNA operon. Processes pre-crRNA and tracrRNA of type II CRISPR loci if present in the organism. This Coxiella burnetii (strain CbuG_Q212) (Coxiella burnetii (strain Q212)) protein is Ribonuclease 3.